An 840-amino-acid polypeptide reads, in one-letter code: MNQEVKNKIFSILKITFATALFIFVVITLYRELSGINFKDTLVEFSKINRMSLVLLFIGGGASLVILSMYDVILSRALKMDISLGKVLRVSYIINALNAIVGFGGFIGAGVRAMVYKNYTHDKKKLVHFISLILISMLTGLSLLSLLIVFHVFDASLILDKITWVRWVLYVVSFFLPLFIIYSMVRPPDKNNRFVGLYCTLVSCVEWLAAAVVLYFCGVIVDAHVSFMSFIAIFIIAALSGLVSFIPGGFGAFDLVVLLGFKTLGVPEEKVLLMLLLYRFAYYFVPVIIALILSSFEFGTSAKKYIEGSKYFIPAKDVTSFLMSYQKDIIAKIPSLSLAILVFFTSMIFFVNNLTIVYDALYDGNHLTYYILLAIHTSACLLLLLNVVGIYKQSRRAIIFAMISILLITVATFFTYASYILITWLAIIFVLLIVAFRRARRLKRPVRMRNIVAMLLFSLFILYVNHIFIAGTLYALDIYTIEMHTSVLRYYFWLTILIIAIIIGMIAWLFDYQFSKVRISSKIEDCEEIINQYGGNYLSHLIYSGDKQFFTNENKTAFLMYRYKASSLVVLGDPLGDENAFDELLEAFYNYAEYLGYDVIFYQVTDQHMPLYHNFGNQFFKLGEEAIIDLTQFSTSGKKRRGFRATLNKFDELNISFEIIEPPFSTEFINELQHVSDLWLDNRQEMHFSVGQFNEEYLSKAPIGVMRNEENEVIAFCSLMPTYFNDAISVDLIRWLPELDLPLMDGLYLHMLLWSKEQGYTKFNMGMATLSNVGQLHYSYLRERLAGRVFEHFNGLYRFQGLRRYKSKYNPNWEPRFLVYRKDNSLWESLSKVMRVIRHK.

Residues 1–8 (MNQEVKNK) are Cytoplasmic-facing. Residues 9-29 (IFSILKITFATALFIFVVITL) traverse the membrane as a helical segment. Topologically, residues 30 to 52 (YRELSGINFKDTLVEFSKINRMS) are extracellular. Residues 53-73 (LVLLFIGGGASLVILSMYDVI) traverse the membrane as a helical segment. Topologically, residues 74 to 89 (LSRALKMDISLGKVLR) are cytoplasmic. The helical transmembrane segment at 90–110 (VSYIINALNAIVGFGGFIGAG) threads the bilayer. The Extracellular portion of the chain corresponds to 111–128 (VRAMVYKNYTHDKKKLVH). A helical membrane pass occupies residues 129 to 149 (FISLILISMLTGLSLLSLLIV). Topologically, residues 150-161 (FHVFDASLILDK) are cytoplasmic. The chain crosses the membrane as a helical span at residues 162–182 (ITWVRWVLYVVSFFLPLFIIY). Over 183-200 (SMVRPPDKNNRFVGLYCT) the chain is Extracellular. A helical membrane pass occupies residues 201–221 (LVSCVEWLAAAVVLYFCGVIV). Topologically, residues 222–229 (DAHVSFMS) are cytoplasmic. A helical transmembrane segment spans residues 230 to 250 (FIAIFIIAALSGLVSFIPGGF). At 251 to 271 (GAFDLVVLLGFKTLGVPEEKV) the chain is on the extracellular side. The helical transmembrane segment at 272–292 (LLMLLLYRFAYYFVPVIIALI) threads the bilayer. Residues 293–337 (LSSFEFGTSAKKYIEGSKYFIPAKDVTSFLMSYQKDIIAKIPSLS) are Cytoplasmic-facing. A helical transmembrane segment spans residues 338–358 (LAILVFFTSMIFFVNNLTIVY). Topologically, residues 359 to 369 (DALYDGNHLTY) are extracellular. Residues 370–390 (YILLAIHTSACLLLLLNVVGI) form a helical membrane-spanning segment. Residues 391–394 (YKQS) lie on the Cytoplasmic side of the membrane. 2 helical membrane passes run 395–415 (RRAI…TFFT) and 416–436 (YASY…IVAF). The Cytoplasmic portion of the chain corresponds to 437–450 (RRARRLKRPVRMRN). A helical transmembrane segment spans residues 451–471 (IVAMLLFSLFILYVNHIFIAG). Residues 472–489 (TLYALDIYTIEMHTSVLR) are Extracellular-facing. Residues 490-510 (YYFWLTILIIAIIIGMIAWLF) form a helical membrane-spanning segment. At 511–840 (DYQFSKVRIS…SKVMRVIRHK (330 aa)) the chain is on the cytoplasmic side.

It belongs to the LPG synthase family.

The protein resides in the cell membrane. The catalysed reaction is L-lysyl-tRNA(Lys) + a 1,2-diacyl-sn-glycero-3-phospho-(1'-sn-glycerol) = a 1,2-diacyl-sn-glycero-3-phospho-1'-(3'-O-L-lysyl)-sn-glycerol + tRNA(Lys). Functionally, catalyzes the transfer of a lysyl group from L-lysyl-tRNA(Lys) to membrane-bound phosphatidylglycerol (PG), which produces lysylphosphatidylglycerol (LPG), a major component of the bacterial membrane with a positive net charge. LPG synthesis contributes to bacterial virulence as it is involved in the resistance mechanism against cationic antimicrobial peptides (CAMP) produces by the host's immune system (defensins, cathelicidins) and by the competing microorganisms (bacteriocins). In fact, the modification of anionic phosphatidylglycerol with positively charged L-lysine results in repulsion of the peptides. This chain is Phosphatidylglycerol lysyltransferase (mprF), found in Staphylococcus aureus (strain MSSA476).